The chain runs to 378 residues: Alginate lyase (378 aa).

The first 28 residues, 1–28 (MQTPKLIRPTLLSMAILSSMAWATGASA), serve as a signal peptide directing secretion. Substrate is bound by residues 67–68 (SK), 140–141 (HT), and tyrosine 258.

The protein belongs to the polysaccharide lyase 5 family.

It localises to the periplasm. The catalysed reaction is Eliminative cleavage of alginate to give oligosaccharides with 4-deoxy-alpha-L-erythro-hex-4-enuronosyl groups at their non-reducing ends and beta-D-mannuronate at their reducing end.. With respect to regulation, the monovalent cation sodium enhances activity but is not absolutely required. Catalyzes the depolymerization of alginate by cleaving the beta-1,4 glycosidic bond between two adjacent sugar residues via a beta-elimination mechanism. Degrades deacetylated polymannuronate (polyM) alginate from P.aeruginosa more efficiently than non-deacetylated polyM and alginate from M.pyrifera. AlgL from P.syringae also degrades its own alginate, which may indicate a role in cleaving preformed alginate and/or in determining the length of the alginate polymer. May serve to degrade mislocalized alginate that is trapped in the periplasmic space. The chain is Alginate lyase from Pseudomonas syringae pv. syringae.